Reading from the N-terminus, the 161-residue chain is Nucleotide-binding protein XCV3791 (161 aa).

Belongs to the YajQ family.

Functionally, nucleotide-binding protein. This Xanthomonas euvesicatoria pv. vesicatoria (strain 85-10) (Xanthomonas campestris pv. vesicatoria) protein is Nucleotide-binding protein XCV3791.